Consider the following 333-residue polypeptide: Dipeptide transport system permease protein DppB (333 aa).

Helical transmembrane passes span 10–30 (LLLI…IHLI), 99–119 (IELT…AGIV), 130–150 (YLSM…LALM), 197–217 (SIKH…AIIA), 256–276 (LIPV…GAIL), and 300–320 (PVIQ…NLFV). In terms of domain architecture, ABC transmembrane type-1 spans 95-324 (LAATIELTIF…LINLFVDLLY (230 aa)).

This sequence belongs to the binding-protein-dependent transport system permease family. OppBC subfamily.

It is found in the cell membrane. Functionally, probably part of the ABC transporter Dpp involved in dipeptide transport. Responsible for the translocation of the substrate across the membrane. This is Dipeptide transport system permease protein DppB (dppB) from Alkalihalophilus pseudofirmus (strain ATCC BAA-2126 / JCM 17055 / OF4) (Bacillus pseudofirmus).